Reading from the N-terminus, the 359-residue chain is tRNA-specific 2-thiouridylase MnmA (359 aa).

Residues 6–13 and Leu32 contribute to the ATP site; that span reads AMSGGVDS. The active-site Nucleophile is Cys101. Cys101 and Cys193 are joined by a disulfide. Residue Gly125 coordinates ATP. An interaction with tRNA region spans residues 143-145; that stretch reads KDQ. The Cysteine persulfide intermediate role is filled by Cys193.

Belongs to the MnmA/TRMU family.

The protein resides in the cytoplasm. It catalyses the reaction S-sulfanyl-L-cysteinyl-[protein] + uridine(34) in tRNA + AH2 + ATP = 2-thiouridine(34) in tRNA + L-cysteinyl-[protein] + A + AMP + diphosphate + H(+). Functionally, catalyzes the 2-thiolation of uridine at the wobble position (U34) of tRNA, leading to the formation of s(2)U34. The polypeptide is tRNA-specific 2-thiouridylase MnmA (Mycobacterium sp. (strain JLS)).